The chain runs to 424 residues: Probable biofilm formation methyltransferase WspC (424 aa).

Residues 1–263 enclose the CheR-type methyltransferase domain; it reads MNEQRFFRFL…IAQSFAYVRH (263 aa). S-adenosyl-L-methionine contacts are provided by residues threonine 68, arginine 72, glutamate 109, aspartate 133, 187–188, and 206–207; these read NV and RN. One copy of the TPR repeat lies at 355 to 388; that stretch reads AQVYYWLGLLSDTEGDAQQALSHYRKALYLEPQH.

In terms of assembly, monomer. The TPR repeat does not mediate self-association.

In terms of biological role, involved in biofilm formation. The sequence is that of Probable biofilm formation methyltransferase WspC (wspC) from Pseudomonas putida (strain ATCC 47054 / DSM 6125 / CFBP 8728 / NCIMB 11950 / KT2440).